Consider the following 286-residue polypeptide: Flagellin FlaB2 (286 aa).

This sequence belongs to the bacterial flagellin family. In terms of assembly, the flagellum consists of an outer layer composed of repeating units of FlaA around a core that contains several antigenically related polypeptides. Interacts with FliW; a synthetic peptide of FlaB1 (residues 229-247) partially blocks binding of this protein to FliW.

Its subcellular location is the periplasmic flagellum. It is found in the periplasm. Component of the core of the flagella. The sequence is that of Flagellin FlaB2 from Treponema pallidum (strain Nichols).